The chain runs to 675 residues: 1,4-alpha-glucan branching enzyme TK1436 (675 aa).

The active-site Nucleophile is the Glu183. Arg261 and Gly278 together coordinate substrate. The active-site Proton donor is Asp354. Residues Trp407, Asp467, and Gln476 each coordinate substrate. 2 disordered regions span residues 537–563 (PELE…KVLT) and 581–627 (EETR…LSIK). 2 stretches are compositionally biased toward basic and acidic residues: residues 549–563 (PPEK…KVLT) and 581–595 (EETR…EASK). The span at 596–616 (RGKRKSSKSKRLPRKVSKKAP) shows a compositional bias: basic residues.

The protein belongs to the glycosyl hydrolase 57 family. As to quaternary structure, monomer.

The catalysed reaction is Transfers a segment of a (1-&gt;4)-alpha-D-glucan chain to a primary hydroxy group in a similar glucan chain.. Catalyzes the formation of branch points in alpha-glucans by cleavage of an alpha-1,4 glycosidic bond and subsequent transfer of the cleaved-off oligosaccharide to a new alpha-1,6 position. The branch chain-length distribution of the reaction products shows degree of polymerization (DP) of 5 to 30, with two local maxima at DP 6 and DP 11. Exhibits an alpha-retaining catalytic mechanism. Does not display alpha-galactosidase or pullulanase activity, since melibiose and pullulan are not substrates. Is not able to catalyze the hydrolysis or transglycosylation of maltoheptaose, suggesting that the TK1436 protein contains neither alpha-amylase nor 4-alpha-glucanotransferase activity. This is 1,4-alpha-glucan branching enzyme TK1436 from Thermococcus kodakarensis (strain ATCC BAA-918 / JCM 12380 / KOD1) (Pyrococcus kodakaraensis (strain KOD1)).